Reading from the N-terminus, the 351-residue chain is Heat-inducible transcription repressor HrcA (351 aa).

This sequence belongs to the HrcA family.

Negative regulator of class I heat shock genes (grpE-dnaK-dnaJ and groELS operons). Prevents heat-shock induction of these operons. The protein is Heat-inducible transcription repressor HrcA of Fusobacterium nucleatum subsp. nucleatum (strain ATCC 25586 / DSM 15643 / BCRC 10681 / CIP 101130 / JCM 8532 / KCTC 2640 / LMG 13131 / VPI 4355).